We begin with the raw amino-acid sequence, 132 residues long: Small ribosomal subunit protein uS8 (132 aa).

The protein belongs to the universal ribosomal protein uS8 family. As to quaternary structure, part of the 30S ribosomal subunit. Contacts proteins S5 and S12.

In terms of biological role, one of the primary rRNA binding proteins, it binds directly to 16S rRNA central domain where it helps coordinate assembly of the platform of the 30S subunit. This chain is Small ribosomal subunit protein uS8, found in Nocardia farcinica (strain IFM 10152).